The primary structure comprises 177 residues: Small ribosomal subunit protein uS5 (177 aa).

The S5 DRBM domain occupies 21–84; sequence LKEKMVSVNR…DEARQRMVRV (64 aa).

Belongs to the universal ribosomal protein uS5 family. As to quaternary structure, part of the 30S ribosomal subunit. Contacts proteins S4 and S8.

Functionally, with S4 and S12 plays an important role in translational accuracy. Its function is as follows. Located at the back of the 30S subunit body where it stabilizes the conformation of the head with respect to the body. The sequence is that of Small ribosomal subunit protein uS5 from Nitrosomonas europaea (strain ATCC 19718 / CIP 103999 / KCTC 2705 / NBRC 14298).